A 214-amino-acid polypeptide reads, in one-letter code: Adenylate kinase (214 aa).

10 to 15 contributes to the ATP binding site; the sequence is GAGKGT. The interval 30–59 is NMP; the sequence is STGDMLRAAIKAGSELGQKAKILMDMGQLV. AMP-binding positions include T31, R36, 57–59, 85–88, and Q92; these read QLV and GFPR. An LID region spans residues 122-159; sequence GRRVHPASGRTYHIVYNPPKVEDKDDITGEDLILRADD. Residues R123 and 132–133 each bind ATP; that span reads TY. Residues R156 and R167 each coordinate AMP. Residue Q200 coordinates ATP.

The protein belongs to the adenylate kinase family. Monomer.

The protein localises to the cytoplasm. It catalyses the reaction AMP + ATP = 2 ADP. It participates in purine metabolism; AMP biosynthesis via salvage pathway; AMP from ADP: step 1/1. Catalyzes the reversible transfer of the terminal phosphate group between ATP and AMP. Plays an important role in cellular energy homeostasis and in adenine nucleotide metabolism. This chain is Adenylate kinase, found in Histophilus somni (strain 129Pt) (Haemophilus somnus).